We begin with the raw amino-acid sequence, 1405 residues long: DNA-directed RNA polymerase subunit beta' (1405 aa).

The Zn(2+) site is built by Cys70, Cys72, Cys85, and Cys88. Residues Asp460, Asp462, and Asp464 each contribute to the Mg(2+) site. Zn(2+) is bound by residues Cys814, Cys888, Cys895, and Cys898.

It belongs to the RNA polymerase beta' chain family. As to quaternary structure, the RNAP catalytic core consists of 2 alpha, 1 beta, 1 beta' and 1 omega subunit. When a sigma factor is associated with the core the holoenzyme is formed, which can initiate transcription. It depends on Mg(2+) as a cofactor. Zn(2+) is required as a cofactor.

It catalyses the reaction RNA(n) + a ribonucleoside 5'-triphosphate = RNA(n+1) + diphosphate. DNA-dependent RNA polymerase catalyzes the transcription of DNA into RNA using the four ribonucleoside triphosphates as substrates. The sequence is that of DNA-directed RNA polymerase subunit beta' from Wigglesworthia glossinidia brevipalpis.